A 263-amino-acid chain; its full sequence is tRNA pseudouridine synthase A (263 aa).

Asp57 acts as the Nucleophile in catalysis. Tyr115 provides a ligand contact to substrate.

Belongs to the tRNA pseudouridine synthase TruA family. In terms of assembly, homodimer.

It catalyses the reaction uridine(38/39/40) in tRNA = pseudouridine(38/39/40) in tRNA. Its function is as follows. Formation of pseudouridine at positions 38, 39 and 40 in the anticodon stem and loop of transfer RNAs. This chain is tRNA pseudouridine synthase A, found in Buchnera aphidicola subsp. Schizaphis graminum (strain Sg).